Reading from the N-terminus, the 330-residue chain is MKDKAYDITIIGGGPIGLFAAFYAGLRGVTVKIIESLSELGGQPAILYPEKMIYDIPAYPSLTGAELTENLIKQLSRFEDRTTICLKEEVLTFDKVKGGFSIRTNKAEHFSKAIIIACGNGAFAPRTLGLESEENFADHNLFYNVHQLDQFAGQKVVICGGGDSAVDWALALEDIAESVTVVHRRDAFRAHEHSVELLKASTVNLLTPYVPKALKGIGNLAEKLVIQKVKEDEVLELELDSLIVSFGFSTSNKNLKNWNLDYKRSSITVSPLFQTSQEGIFAIGDAAAYNGKVDLIATGFGEAPTAVNQAINYIYPDRDNRVVHSTSLID.

Residues Glu35, Gln43, Tyr48, Val90, Phe123, Asp285, and Thr326 each coordinate FAD.

The protein belongs to the ferredoxin--NADP reductase type 2 family. Homodimer. FAD is required as a cofactor.

The enzyme catalyses 2 reduced [2Fe-2S]-[ferredoxin] + NADP(+) + H(+) = 2 oxidized [2Fe-2S]-[ferredoxin] + NADPH. This is Ferredoxin--NADP reductase from Streptococcus pyogenes serotype M3 (strain ATCC BAA-595 / MGAS315).